Reading from the N-terminus, the 210-residue chain is Somatotropin (210 aa).

Positions 1–22 (MGQVFLLMPVLLVSCFLSHGAA) are cleaved as a signal peptide. His-38 is a binding site for Zn(2+). A disulfide bridge connects residues Cys-71 and Cys-183. Glu-192 is a Zn(2+) binding site. Cysteines 200 and 208 form a disulfide.

Belongs to the somatotropin/prolactin family.

It localises to the secreted. Functionally, growth hormone plays an important role in growth control and is involved in the regulation of several anabolic processes. Implicated as an osmoregulatory substance important for seawater adaptation. The protein is Somatotropin (gh) of Oncorhynchus masou (Cherry salmon).